The following is a 396-amino-acid chain: MSIASNSTVIILGSTGSIGTQGLDVISRHPERFTVTGLAAGGAHIELLAQQAAQFHVSEAAVFDETKVPALQAALAQAGAQGVRVTGGPDSVIAMAGSGANVVLNGITGSIGLEPSIAALKAGSQLALANKESVVAGGHLLFSAQVRENQINPVDSEHSAIWQSLRSGTHAEVAKLVVTASGGPFRGWKRADMENITPEQALHHPTWNMGPVVTINSSTLMNKGLEVIEASRLFNVPPERIDVTVHPQSIVHSMVEFVDGATICQASPPDMRLPIALGLSAPDRMTNVAAACDWTQAATWTFEPLDDEAFPAVQLARHCLAASEKHTAVLNAANEQAVHAFLEHRLPYLGIVDTVKAVLDQMDAELRGNPLFTDVEEMNQLELEARRRADDLINKQ.

Residues Thr15, Gly16, Ser17, Ile18, Gly41, and Asn130 each contribute to the NADPH site. A 1-deoxy-D-xylulose 5-phosphate-binding site is contributed by Lys131. Residue Glu132 participates in NADPH binding. A Mn(2+)-binding site is contributed by Asp155. Residues Ser156, Glu157, Ser181, and His204 each contribute to the 1-deoxy-D-xylulose 5-phosphate site. A Mn(2+)-binding site is contributed by Glu157. Gly210 contributes to the NADPH binding site. 1-deoxy-D-xylulose 5-phosphate-binding residues include Ser217, Asn222, Lys223, and Glu226. A Mn(2+)-binding site is contributed by Glu226.

Belongs to the DXR family. The cofactor is Mg(2+). Requires Mn(2+) as cofactor.

The enzyme catalyses 2-C-methyl-D-erythritol 4-phosphate + NADP(+) = 1-deoxy-D-xylulose 5-phosphate + NADPH + H(+). It participates in isoprenoid biosynthesis; isopentenyl diphosphate biosynthesis via DXP pathway; isopentenyl diphosphate from 1-deoxy-D-xylulose 5-phosphate: step 1/6. Functionally, catalyzes the NADPH-dependent rearrangement and reduction of 1-deoxy-D-xylulose-5-phosphate (DXP) to 2-C-methyl-D-erythritol 4-phosphate (MEP). This is 1-deoxy-D-xylulose 5-phosphate reductoisomerase from Bifidobacterium longum (strain DJO10A).